A 367-amino-acid polypeptide reads, in one-letter code: Aminomethyltransferase (367 aa).

It belongs to the GcvT family. In terms of assembly, the glycine cleavage system is composed of four proteins: P, T, L and H.

It catalyses the reaction N(6)-[(R)-S(8)-aminomethyldihydrolipoyl]-L-lysyl-[protein] + (6S)-5,6,7,8-tetrahydrofolate = N(6)-[(R)-dihydrolipoyl]-L-lysyl-[protein] + (6R)-5,10-methylene-5,6,7,8-tetrahydrofolate + NH4(+). Its function is as follows. The glycine cleavage system catalyzes the degradation of glycine. The polypeptide is Aminomethyltransferase (Saccharopolyspora erythraea (strain ATCC 11635 / DSM 40517 / JCM 4748 / NBRC 13426 / NCIMB 8594 / NRRL 2338)).